A 362-amino-acid chain; its full sequence is Peptide chain release factor 1 (362 aa).

The residue at position 236 (Gln-236) is an N5-methylglutamine.

The protein belongs to the prokaryotic/mitochondrial release factor family. In terms of processing, methylated by PrmC. Methylation increases the termination efficiency of RF1.

It localises to the cytoplasm. Functionally, peptide chain release factor 1 directs the termination of translation in response to the peptide chain termination codons UAG and UAA. In Lactobacillus johnsonii (strain CNCM I-12250 / La1 / NCC 533), this protein is Peptide chain release factor 1.